The following is a 121-amino-acid chain: Tachykinin-3 (121 aa).

Positions 1 to 16 (MRIMLLFTAILAFSLA) are cleaved as a signal peptide. The propeptide occupies 17–78 (QSFGAVCKEP…TDPKESTSPE (62 aa)). At M90 the chain carries Methionine amide. Residues 93–121 (RSVQPDSPTDVNQENVPSFGILKYPPRAE) form a disordered region. Residues 94–121 (SVQPDSPTDVNQENVPSFGILKYPPRAE) constitute a propeptide that is removed on maturation. Residues 96–108 (QPDSPTDVNQENV) are compositionally biased toward polar residues.

The protein belongs to the tachykinin family.

Its subcellular location is the secreted. Functionally, tachykinins are active peptides which excite neurons, evoke behavioral responses, are potent vasodilators and secretagogues, and contract (directly or indirectly) many smooth muscles. Is a critical central regulator of gonadal function. The sequence is that of Tachykinin-3 (TAC3) from Homo sapiens (Human).